Here is a 278-residue protein sequence, read N- to C-terminus: Potassium/proton antiporter CemA (278 aa).

Transmembrane regions (helical) follow at residues 60-80 (YLLLLITVPLIVNQISKSFVF), 155-175 (AMKNLLADVLAFVTFVYLIVT), 201-221 (FLIILFTDIFVGFHSTHGWEV), and 239-259 (IFLFIATFPVVLDTVFKYWIF).

It belongs to the CemA family.

It is found in the plastid. The protein resides in the chloroplast inner membrane. It catalyses the reaction K(+)(in) + H(+)(out) = K(+)(out) + H(+)(in). Contributes to K(+)/H(+) antiport activity by supporting proton efflux to control proton extrusion and homeostasis in chloroplasts in a light-dependent manner to modulate photosynthesis. Prevents excessive induction of non-photochemical quenching (NPQ) under continuous-light conditions. Indirectly promotes efficient inorganic carbon uptake into chloroplasts. The sequence is that of Potassium/proton antiporter CemA from Rhodomonas salina (Cryptomonas salina).